Reading from the N-terminus, the 372-residue chain is Cyclin-J (372 aa).

The region spanning 15–143 (DIHQALRYKE…LLETFQWNLC (129 aa)) is the Cyclin N-terminal domain.

Belongs to the cyclin family.

The polypeptide is Cyclin-J (CCNJ) (Homo sapiens (Human)).